The primary structure comprises 209 residues: Cytidylate kinase (209 aa).

7–15 provides a ligand contact to ATP; that stretch reads GPAASGKGT.

The protein belongs to the cytidylate kinase family. Type 1 subfamily.

Its subcellular location is the cytoplasm. It catalyses the reaction CMP + ATP = CDP + ADP. The catalysed reaction is dCMP + ATP = dCDP + ADP. The protein is Cytidylate kinase of Afipia carboxidovorans (strain ATCC 49405 / DSM 1227 / KCTC 32145 / OM5) (Oligotropha carboxidovorans).